Reading from the N-terminus, the 177-residue chain is Large ribosomal subunit protein uL6 (177 aa).

Belongs to the universal ribosomal protein uL6 family. As to quaternary structure, part of the 50S ribosomal subunit.

Its function is as follows. This protein binds to the 23S rRNA, and is important in its secondary structure. It is located near the subunit interface in the base of the L7/L12 stalk, and near the tRNA binding site of the peptidyltransferase center. This is Large ribosomal subunit protein uL6 from Mesorhizobium japonicum (strain LMG 29417 / CECT 9101 / MAFF 303099) (Mesorhizobium loti (strain MAFF 303099)).